A 540-amino-acid chain; its full sequence is Phenylalanine--tRNA ligase beta subunit (540 aa).

A B5 domain is found at 268-342 (LRHTSVPFSL…MAYGYDRFTL (75 aa)). Residues D320, D326, E329, and D330 each contribute to the Mg(2+) site.

The protein belongs to the phenylalanyl-tRNA synthetase beta subunit family. Type 2 subfamily. As to quaternary structure, tetramer of two alpha and two beta subunits. It depends on Mg(2+) as a cofactor.

Its subcellular location is the cytoplasm. It carries out the reaction tRNA(Phe) + L-phenylalanine + ATP = L-phenylalanyl-tRNA(Phe) + AMP + diphosphate + H(+). The polypeptide is Phenylalanine--tRNA ligase beta subunit (Metallosphaera sedula (strain ATCC 51363 / DSM 5348 / JCM 9185 / NBRC 15509 / TH2)).